The sequence spans 275 residues: 2,3,4,5-tetrahydropyridine-2,6-dicarboxylate N-succinyltransferase (275 aa).

Substrate-binding residues include R104 and D141.

This sequence belongs to the transferase hexapeptide repeat family. As to quaternary structure, homotrimer.

The protein localises to the cytoplasm. It catalyses the reaction (S)-2,3,4,5-tetrahydrodipicolinate + succinyl-CoA + H2O = (S)-2-succinylamino-6-oxoheptanedioate + CoA. The protein operates within amino-acid biosynthesis; L-lysine biosynthesis via DAP pathway; LL-2,6-diaminopimelate from (S)-tetrahydrodipicolinate (succinylase route): step 1/3. This Haemophilus influenzae (strain 86-028NP) protein is 2,3,4,5-tetrahydropyridine-2,6-dicarboxylate N-succinyltransferase.